We begin with the raw amino-acid sequence, 324 residues long: Thiamine thiazole synthase (324 aa).

Residues Cys86, 107 to 108 (EA), Gly115, and Val180 contribute to the substrate site. Cys213 carries the post-translational modification 2,3-didehydroalanine (Cys). Residues Asp215, His230, Met282, and 292 to 294 (RMG) contribute to the substrate site.

This sequence belongs to the THI4 family. As to quaternary structure, homooctamer. Requires Fe cation as cofactor. In terms of processing, during the catalytic reaction, a sulfide is transferred from Cys-213 to a reaction intermediate, generating a dehydroalanine residue.

It localises to the cytoplasm. The protein resides in the nucleus. The enzyme catalyses [ADP-thiazole synthase]-L-cysteine + glycine + NAD(+) = [ADP-thiazole synthase]-dehydroalanine + ADP-5-ethyl-4-methylthiazole-2-carboxylate + nicotinamide + 3 H2O + 2 H(+). Involved in biosynthesis of the thiamine precursor thiazole. Catalyzes the conversion of NAD and glycine to adenosine diphosphate 5-(2-hydroxyethyl)-4-methylthiazole-2-carboxylic acid (ADT), an adenylated thiazole intermediate. The reaction includes an iron-dependent sulfide transfer from a conserved cysteine residue of the protein to a thiazole intermediate. The enzyme can only undergo a single turnover, which suggests it is a suicide enzyme. May have additional roles in adaptation to various stress conditions and in DNA damage tolerance. This chain is Thiamine thiazole synthase (sti35), found in Fusarium solani subsp. phaseoli (Nectria haematococca).